The sequence spans 490 residues: Protein nucleotidyltransferase YdiU (490 aa).

ATP contacts are provided by Gly-89, Gly-91, Arg-92, Lys-112, Asp-124, Gly-125, Arg-175, and Arg-182. Residue Asp-251 is the Proton acceptor of the active site. Residues Asn-252 and Asp-261 each contribute to the Mg(2+) site. Asp-261 serves as a coordination point for ATP.

Belongs to the SELO family. Mg(2+) serves as cofactor. The cofactor is Mn(2+).

The catalysed reaction is L-seryl-[protein] + ATP = 3-O-(5'-adenylyl)-L-seryl-[protein] + diphosphate. It catalyses the reaction L-threonyl-[protein] + ATP = 3-O-(5'-adenylyl)-L-threonyl-[protein] + diphosphate. The enzyme catalyses L-tyrosyl-[protein] + ATP = O-(5'-adenylyl)-L-tyrosyl-[protein] + diphosphate. It carries out the reaction L-histidyl-[protein] + UTP = N(tele)-(5'-uridylyl)-L-histidyl-[protein] + diphosphate. The catalysed reaction is L-seryl-[protein] + UTP = O-(5'-uridylyl)-L-seryl-[protein] + diphosphate. It catalyses the reaction L-tyrosyl-[protein] + UTP = O-(5'-uridylyl)-L-tyrosyl-[protein] + diphosphate. Its function is as follows. Nucleotidyltransferase involved in the post-translational modification of proteins. It can catalyze the addition of adenosine monophosphate (AMP) or uridine monophosphate (UMP) to a protein, resulting in modifications known as AMPylation and UMPylation. This Vibrio vulnificus (strain YJ016) protein is Protein nucleotidyltransferase YdiU.